The following is a 281-amino-acid chain: tRNA N(3)-cytidine methyltransferase METTL8, mitochondrial (281 aa).

The N-terminal 22 residues, 1-22 (MNVIWRSCICRLRQGKVPHRCQ), are a transit peptide targeting the mitochondrion. Lys-80 participates in a covalent cross-link: Glycyl lysine isopeptide (Lys-Gly) (interchain with G-Cter in SUMO). S-adenosyl-L-methionine is bound by residues Trp-89 and Tyr-93. The segment covering 139–151 (RTQGTETHCQESF) has biased composition (polar residues). Positions 139-180 (RTQGTETHCQESFVSPEPGSRGRSAPDPDLEEYSKGPGKTEP) are disordered. 3 residues coordinate S-adenosyl-L-methionine: Gly-194, Asp-220, and Asp-246.

This sequence belongs to the methyltransferase superfamily. METL family. In terms of assembly, interacts with EP300. In terms of tissue distribution, absent in embryonic lung but is induced in a fibroblast cell line by stretch. As to expression, expressed in undifferentiated progenitor cells, while its expression is inhibited by stretch. Absent in undifferentiated embryonic lung mesenchymal cells, but expression is induced by stretch. In terms of tissue distribution, expressed in mature adipose tissue.

Its subcellular location is the mitochondrion. The protein localises to the cytoplasm. It localises to the nucleus. It carries out the reaction cytidine(32) in tRNA(Ser) + S-adenosyl-L-methionine = N(3)-methylcytidine(32) in tRNA(Ser) + S-adenosyl-L-homocysteine + H(+). The enzyme catalyses cytidine(32) in tRNA(Thr) + S-adenosyl-L-methionine = N(3)-methylcytidine(32) in tRNA(Thr) + S-adenosyl-L-homocysteine + H(+). The catalysed reaction is a cytidine in mRNA + S-adenosyl-L-methionine = an N(3)-methylcytidine in mRNA + S-adenosyl-L-homocysteine + H(+). Its function is as follows. Mitochondrial S-adenosyl-L-methionine-dependent methyltransferase that mediates N(3)-methylcytidine modification of residue 32 of the tRNA anticodon loop of mitochondrial tRNA(Ser)(UCN) and tRNA(Thr). N(3)-methylcytidine methylation modification regulates mitochondrial translation efficiency and is required for activity of the respiratory chain. N(3)-methylcytidine methylation of mitochondrial tRNA(Ser)(UCN) requires the formation of N(6)-dimethylallyladenosine(37) (i6A37) by TRIT1 as prerequisite. May also mediate N(3)-methylcytidine modification of mRNAs. The existence of N(3)-methylcytidine modification on mRNAs is however unclear, and additional evidences are required to confirm the role of the N(3)-methylcytidine-specific mRNA methyltransferase activity of METTL8 in vivo. Overexpression in lung progenitor cells stimulates smooth muscle-specific gene expression and suppresses adipogenic gene expression. In terms of biological role, stimulates adipogenesis. The chain is tRNA N(3)-cytidine methyltransferase METTL8, mitochondrial from Mus musculus (Mouse).